Here is a 122-residue protein sequence, read N- to C-terminus: Large ribosomal subunit protein uL14 (122 aa).

Belongs to the universal ribosomal protein uL14 family. Part of the 50S ribosomal subunit. Forms a cluster with proteins L3 and L19. In the 70S ribosome, L14 and L19 interact and together make contacts with the 16S rRNA in bridges B5 and B8.

Functionally, binds to 23S rRNA. Forms part of two intersubunit bridges in the 70S ribosome. This Bordetella parapertussis (strain 12822 / ATCC BAA-587 / NCTC 13253) protein is Large ribosomal subunit protein uL14.